The chain runs to 210 residues: Protein MSO1 (210 aa).

Methionine 1 carries the N-acetylmethionine modification. Methionine 2 is modified (N-acetylserine). Residues 88–210 (KHDMKKQNSR…LKRRNNDYGF (123 aa)) are disordered. The residue at position 102 (serine 102) is a Phosphoserine. Residues 117 to 141 (TPSSNGNTPEYTPASKSFQDIYNNH) show a composition bias toward polar residues. Low complexity-rich tracts occupy residues 142–161 (TSSS…RPSA) and 172–183 (SKTSNSFNTSST).

As to quaternary structure, interacts physically with SEC1.

Functionally, involved in secretion. Component of the secretory vesicle docking complex. The polypeptide is Protein MSO1 (MSO1) (Saccharomyces cerevisiae (strain ATCC 204508 / S288c) (Baker's yeast)).